The following is a 394-amino-acid chain: Cell division protein FtsZ (394 aa).

Residues 21–25, Arg-29, 108–110, Glu-139, Arg-143, Asn-166, and Asp-187 each bind GTP; these read GGGNN and GTG. The segment at 317–394 is disordered; sequence DKPSSQGRKA…EERRSRRTRR (78 aa). Low complexity-rich tracts occupy residues 328–346 and 353–364; these read STGF…SGAS and SAHTSHSQSSES. The span at 365-388 shows a compositional bias: basic and acidic residues; the sequence is VSERSHTTKDDDIPSFIRNREERR.

Belongs to the FtsZ family. In terms of assembly, homodimer. Polymerizes to form a dynamic ring structure in a strictly GTP-dependent manner. Interacts directly with several other division proteins.

The protein resides in the cytoplasm. Functionally, essential cell division protein that forms a contractile ring structure (Z ring) at the future cell division site. The regulation of the ring assembly controls the timing and the location of cell division. One of the functions of the FtsZ ring is to recruit other cell division proteins to the septum to produce a new cell wall between the dividing cells. Binds GTP and shows GTPase activity. The protein is Cell division protein FtsZ of Staphylococcus epidermidis (strain ATCC 35984 / DSM 28319 / BCRC 17069 / CCUG 31568 / BM 3577 / RP62A).